Here is a 488-residue protein sequence, read N- to C-terminus: DNA polymerase II small subunit (488 aa).

It belongs to the DNA polymerase delta/II small subunit family. As to quaternary structure, heterodimer of a large subunit and a small subunit.

The catalysed reaction is DNA(n) + a 2'-deoxyribonucleoside 5'-triphosphate = DNA(n+1) + diphosphate. It catalyses the reaction Exonucleolytic cleavage in the 3'- to 5'-direction to yield nucleoside 5'-phosphates.. Its function is as follows. Possesses two activities: a DNA synthesis (polymerase) and an exonucleolytic activity that degrades single-stranded DNA in the 3' to 5' direction. Has a template-primer preference which is characteristic of a replicative DNA polymerase. This chain is DNA polymerase II small subunit (polB), found in Thermoplasma acidophilum (strain ATCC 25905 / DSM 1728 / JCM 9062 / NBRC 15155 / AMRC-C165).